A 157-amino-acid polypeptide reads, in one-letter code: UPF0262 protein Rleg2_0240 (157 aa).

Belongs to the UPF0262 family.

The protein is UPF0262 protein Rleg2_0240 of Rhizobium leguminosarum bv. trifolii (strain WSM2304).